Reading from the N-terminus, the 152-residue chain is Endoribonuclease YbeY (152 aa).

Positions 101, 105, and 111 each coordinate Zn(2+). The tract at residues 132-152 is disordered; that stretch reads PSSLIERTTKPAKKAAKRKKR. Residues 141-152 show a composition bias toward basic residues; that stretch reads KPAKKAAKRKKR.

The protein belongs to the endoribonuclease YbeY family. Zn(2+) serves as cofactor.

Its subcellular location is the cytoplasm. In terms of biological role, single strand-specific metallo-endoribonuclease involved in late-stage 70S ribosome quality control and in maturation of the 3' terminus of the 16S rRNA. The protein is Endoribonuclease YbeY of Koribacter versatilis (strain Ellin345).